The primary structure comprises 156 residues: Small ribosomal subunit protein uS7 (156 aa).

Belongs to the universal ribosomal protein uS7 family. As to quaternary structure, part of the 30S ribosomal subunit. Contacts proteins S9 and S11.

One of the primary rRNA binding proteins, it binds directly to 16S rRNA where it nucleates assembly of the head domain of the 30S subunit. Is located at the subunit interface close to the decoding center, probably blocks exit of the E-site tRNA. The sequence is that of Small ribosomal subunit protein uS7 from Tolumonas auensis (strain DSM 9187 / NBRC 110442 / TA 4).